We begin with the raw amino-acid sequence, 266 residues long: Signal peptidase I (266 aa).

The Cytoplasmic segment spans residues 1-20 (MQTDNTKSNTNKTAKQEWGS). Residues 21 to 41 (FAFVICIALLIRILIMEPFNV) form a helical membrane-spanning segment. The Extracellular portion of the chain corresponds to 42–266 (PTGSMKATIL…IFRNLYNTDA (225 aa)). Active-site residues include Ser45 and Lys108.

The protein belongs to the peptidase S26 family.

The protein resides in the cell membrane. The catalysed reaction is Cleavage of hydrophobic, N-terminal signal or leader sequences from secreted and periplasmic proteins.. The polypeptide is Signal peptidase I (lepB) (Rickettsia conorii (strain ATCC VR-613 / Malish 7)).